The chain runs to 886 residues: DNA double-strand break repair Rad50 ATPase (886 aa).

Residues 32-38 and glutamine 137 each bind ATP; that span reads NGAGKSS. Coiled coils occupy residues 181–240 and 320–416; these read IRSL…KEIK and RKKE…GDLN. Residues 391-489 enclose the Zinc-hook domain; that stretch reads IKDVSDRINQ…EREELEATRN (99 aa). Positions 437 and 440 each coordinate Zn(2+). Coiled-coil stretches lie at residues 450-657 and 682-718; these read AKIR…ISEL and EADK…EESK.

The protein belongs to the SMC family. RAD50 subfamily. As to quaternary structure, homodimer. Forms a heterotetramer composed of two Mre11 subunits and two Rad50 subunits. Interacts with Mre11 and HerA. Zn(2+) serves as cofactor.

In terms of biological role, part of the Rad50/Mre11 complex, which is involved in the early steps of DNA double-strand break (DSB) repair. The complex may facilitate opening of the processed DNA ends to aid in the recruitment of HerA and NurA. Rad50 controls the balance between DNA end bridging and DNA resection via ATP-dependent structural rearrangements of the Rad50/Mre11 complex. In Sulfolobus acidocaldarius (strain ATCC 33909 / DSM 639 / JCM 8929 / NBRC 15157 / NCIMB 11770), this protein is DNA double-strand break repair Rad50 ATPase.